Here is a 712-residue protein sequence, read N- to C-terminus: Polyphosphate kinase (712 aa).

Residue N49 coordinates ATP. Residues R398 and R428 each contribute to the Mg(2+) site. H458 functions as the Phosphohistidine intermediate in the catalytic mechanism. 3 residues coordinate ATP: Y491, R587, and H615.

The protein belongs to the polyphosphate kinase 1 (PPK1) family. Mg(2+) serves as cofactor. Post-translationally, an intermediate of this reaction is the autophosphorylated ppk in which a phosphate is covalently linked to a histidine residue through a N-P bond.

The catalysed reaction is [phosphate](n) + ATP = [phosphate](n+1) + ADP. In terms of biological role, catalyzes the reversible transfer of the terminal phosphate of ATP to form a long-chain polyphosphate (polyP). The sequence is that of Polyphosphate kinase from Prochlorococcus marinus (strain MIT 9313).